The primary structure comprises 718 residues: DNA topoisomerase 1 (718 aa).

The 143-residue stretch at 9–151 (HEVIICEKPK…KFSTLTREEI (143 aa)) folds into the Toprim domain. Glu15 and Asp113 together coordinate Mg(2+). The Topo IA-type catalytic domain maps to 162 to 571 (DYGQVDSGAA…EAITEVRSIL (410 aa)). The interval 202-207 (SAGRVQ) is interaction with DNA. The active-site O-(5'-phospho-DNA)-tyrosine intermediate is Tyr320. Residues 361-371 (HEGKKEDDAHP) show a composition bias toward basic and acidic residues. Residues 361–380 (HEGKKEDDAHPAIHPTGLLP) form a disordered region. C4-type zinc fingers lie at residues 598–626 (CPACGGKLVIKYSPRNRSTFVGCSSYPDC) and 680–706 (CPECGSDLIKRSGRYGEFVGCKGFPKC).

It belongs to the type IA topoisomerase family. Monomer. The cofactor is Mg(2+).

The catalysed reaction is ATP-independent breakage of single-stranded DNA, followed by passage and rejoining.. Functionally, releases the supercoiling and torsional tension of DNA, which is introduced during the DNA replication and transcription, by transiently cleaving and rejoining one strand of the DNA duplex. Introduces a single-strand break via transesterification at a target site in duplex DNA. The scissile phosphodiester is attacked by the catalytic tyrosine of the enzyme, resulting in the formation of a DNA-(5'-phosphotyrosyl)-enzyme intermediate and the expulsion of a 3'-OH DNA strand. The free DNA strand then undergoes passage around the unbroken strand, thus removing DNA supercoils. Finally, in the religation step, the DNA 3'-OH attacks the covalent intermediate to expel the active-site tyrosine and restore the DNA phosphodiester backbone. In Methanothermobacter thermautotrophicus (strain ATCC 29096 / DSM 1053 / JCM 10044 / NBRC 100330 / Delta H) (Methanobacterium thermoautotrophicum), this protein is DNA topoisomerase 1.